A 200-amino-acid polypeptide reads, in one-letter code: Large ribosomal subunit protein uL4 (200 aa).

The tract at residues 43–65 is disordered; that stretch reads RAQKTRSEVSGGGAKPWRQKGTG.

The protein belongs to the universal ribosomal protein uL4 family. As to quaternary structure, part of the 50S ribosomal subunit.

Functionally, one of the primary rRNA binding proteins, this protein initially binds near the 5'-end of the 23S rRNA. It is important during the early stages of 50S assembly. It makes multiple contacts with different domains of the 23S rRNA in the assembled 50S subunit and ribosome. Its function is as follows. Forms part of the polypeptide exit tunnel. In Aliivibrio salmonicida (strain LFI1238) (Vibrio salmonicida (strain LFI1238)), this protein is Large ribosomal subunit protein uL4.